The sequence spans 552 residues: Glutamine--tRNA ligase (552 aa).

The 'HIGH' region signature appears at 34–44; it reads PEPNGYLHIGH. ATP contacts are provided by residues 35–37 and 41–47; these read EPN and HIGHAKS. 2 residues coordinate L-glutamine: D67 and Y212. ATP is bound by residues T231, 261–262, and 269–271; these read RL and MSK. The 'KMSKS' region signature appears at 268 to 272; sequence IMSKR.

The protein belongs to the class-I aminoacyl-tRNA synthetase family. Monomer.

The protein localises to the cytoplasm. The catalysed reaction is tRNA(Gln) + L-glutamine + ATP = L-glutaminyl-tRNA(Gln) + AMP + diphosphate. The sequence is that of Glutamine--tRNA ligase from Aliivibrio salmonicida (strain LFI1238) (Vibrio salmonicida (strain LFI1238)).